Consider the following 149-residue polypeptide: UPF0178 protein VV1_1847 (149 aa).

Belongs to the UPF0178 family.

In Vibrio vulnificus (strain CMCP6), this protein is UPF0178 protein VV1_1847.